The primary structure comprises 524 residues: Keratin, type II cytoskeletal 72 (524 aa).

The segment at 1–136 is head; that stretch reads MSRQLNLYPG…DPEIQKVRAQ (136 aa). The segment at 137–172 is coil 1A; it reads EREQIKALNNKFASFIDKVRFLEQQNQVLGTKWELL. An IF rod domain is found at 137–450; sequence EREQIKALNN…KLLEGEECRM (314 aa). Positions 173 to 191 are linker 1; that stretch reads QQLDLNNCKNNLEPILEGY. The segment at 192–283 is coil 1B; that stretch reads TSNLRKQLEM…CLYEGEIAQL (92 aa). The tract at residues 284–307 is linker 12; it reads QSHISDTSVILSMDNNRDLDLDSI. The segment at 308-446 is coil 2; the sequence is IAQVRAQYEE…ATYRKLLEGE (139 aa). Residues 447-524 form a tail region; that stretch reads ECRMSGEYPN…SSCATKKASR (78 aa). A disordered region spans residues 495 to 524; the sequence is KTKGSCGGSELKDAPAKTSGSSCATKKASR.

It belongs to the intermediate filament family. As to quaternary structure, heterotetramer of two type I and two type II keratins.

Its function is as follows. Has a role in hair formation. Specific component of keratin intermediate filaments in the inner root sheath (IRS) of the hair follicle. The chain is Keratin, type II cytoskeletal 72 (KRT72) from Bos taurus (Bovine).